The following is a 543-amino-acid chain: Protein SGE1 (543 aa).

The Cytoplasmic portion of the chain corresponds to 1-8 (MKSTLSLT). Residues 9-29 (LCVISLLLTLFLAALDIVIVV) form a helical membrane-spanning segment. The Extracellular segment spans residues 30 to 41 (TLYDTIGIKFHD). A helical transmembrane segment spans residues 42 to 62 (FGNIGWLVTGYALSNAVFMLL). At 63–79 (WGRLAEILGTKECLMIS) the chain is on the cytoplasmic side. A helical transmembrane segment spans residues 80 to 100 (VIVFEIGSLISALSNSMATLI). Residues 101–103 (SGR) are Extracellular-facing. Residues 104–124 (VVAGFGGSGIESLAFVVGTSI) traverse the membrane as a helical segment. At 125–131 (VRENHRG) the chain is on the cytoplasmic side. Residues 132 to 152 (IMITALAISYVIAEGVGPFIG) form a helical membrane-spanning segment. Topologically, residues 153-162 (GAFNEHLSWR) are extracellular. Residues 163 to 183 (WCFYINLPIGAFAFIILAFCN) form a helical membrane-spanning segment. Residues 184–227 (TSGEPHQKMWLPSKIKKIMNYDYGELLKASFWKNTFEVLVFKLD) are Cytoplasmic-facing. A helical transmembrane segment spans residues 228–248 (MVGIILSSAGFTLLMLGLSFG). Residues 249–255 (GNNFPWN) lie on the Extracellular side of the membrane. Residues 256-276 (SGIIICFFTVGPILLLLFCAY) form a helical membrane-spanning segment. The Cytoplasmic portion of the chain corresponds to 277–300 (DFHFLSLSGLHYDNKRIKPLLTWN). The chain crosses the membrane as a helical span at residues 301-321 (IASNCGIFTSSITGFLSCFAY). The Extracellular portion of the chain corresponds to 322 to 341 (ELQSAYLVQLYQLVFKKKPT). A helical transmembrane segment spans residues 342–362 (LASIHLWELSIPAMIATMAIA). Residues 363–373 (YLNSKYGIIKP) lie on the Cytoplasmic side of the membrane. Residues 374-394 (AIVFGVLCGIVGSGLFTLING) form a helical membrane-spanning segment. The Extracellular segment spans residues 395–399 (ELSQS). A helical membrane pass occupies residues 400-420 (IGYSILPGIAFGSIFQATLLS). Residues 421–443 (SQVQITSDDPDFQNKFIEVTAFN) lie on the Cytoplasmic side of the membrane. A helical transmembrane segment spans residues 444–464 (SFAKSLGFAFGGNMGAMIFTA). Over 465-508 (SLKNQMRSSQLNIPQFTSVETLLAYSTEHYDGPQSSLSKFINTA) the chain is Extracellular. A helical transmembrane segment spans residues 509–529 (IHDVFYCALGCYALSFFFGIF). At 530–543 (TSSKKTTISAKKQQ) the chain is on the cytoplasmic side.

The protein belongs to the major facilitator superfamily.

The protein resides in the membrane. Drug export permease. Multi-copy suppressor of loss-of-function mutation of GAL11. Involved specifically in transcription of GAL4-dependent genes. Can link GAL4 with the basal transcription machinery if GAL11 is missing. Confers resistance to 10-N-nonyl acridine orange (NAO) and in general to cationic dyes. In Saccharomyces cerevisiae (strain ATCC 204508 / S288c) (Baker's yeast), this protein is Protein SGE1 (SGE1).